The sequence spans 984 residues: MYCBP-associated protein (984 aa).

Disordered stretches follow at residues 61–88 (LEASENVKEKKRAKGPEQPTPTIQEEPE) and 218–240 (GESKQKAPKEEKRPPWAPPPQHN). Over residues 218–231 (GESKQKAPKEEKRP) the composition is skewed to basic and acidic residues. T613 carries the post-translational modification Phosphothreonine. Phosphoserine is present on S619. Disordered stretches follow at residues 693-729 (SPISETQVPRPENEALRESGSQKARVGTKSPQRKSIM) and 842-917 (PEEQ…ASQD). A compositionally biased stretch (basic and acidic residues) spans 862-910 (AGKEERKGAAQEKKQLGIKDKEDKKGAKLLGKEDRPNSKKHKAKDDKKV).

As to quaternary structure, interacts with MYCBP. As to expression, expressed specifically in testis.

It localises to the cytoplasm. Its subcellular location is the membrane. Functionally, may play a role in spermatogenesis. May be involved in synaptic processes. In Homo sapiens (Human), this protein is MYCBP-associated protein.